The chain runs to 146 residues: Hemoglobin subunit beta (146 aa).

Residue V1 is modified to N-acetylvaline. The Globin domain maps to 2–146; it reads DLTAEEKAAV…VANALAHKYH (145 aa). A Phosphoserine modification is found at S44. K59 carries the post-translational modification N6-acetyllysine. H63 serves as a coordination point for heme b. N6-acetyllysine is present on K82. H92 contacts heme b. C93 carries the S-nitrosocysteine modification. The residue at position 144 (K144) is an N6-acetyllysine.

It belongs to the globin family. In terms of assembly, heterotetramer of two alpha chains and two beta chains. In terms of tissue distribution, red blood cells.

Involved in oxygen transport from the lung to the various peripheral tissues. This is Hemoglobin subunit beta (HBB) from Rhinoceros unicornis (Greater Indian rhinoceros).